The following is a 326-amino-acid chain: Prenyl transferase nodC (326 aa).

A helical membrane pass occupies residues 8–28; the sequence is LAAVLFSALFSLGVILVHLPW. H95 lines the isopentenyl diphosphate pocket. Positions 102 and 106 each coordinate Mg(2+). R111 provides a ligand contact to dimethylallyl diphosphate. N139 carries N-linked (GlcNAc...) asparagine glycosylation. K195 provides a ligand contact to dimethylallyl diphosphate. N210 carries N-linked (GlcNAc...) asparagine glycosylation.

It belongs to the FPP/GGPP synthase family.

Its subcellular location is the membrane. It functions in the pathway secondary metabolite biosynthesis. Its function is as follows. Cytochrome P450 monooxygenase; part of the gene cluster that mediates the biosynthesis of the indole diterpenes nodulisporic acids (NA). Nodulisporic acid A (NAA) and its chemically modified derivatives are of particular significance because of their highly potent insecticidal activity against blood-feeding arthropods and lack of observable adverse effects on mammals, in particular the tremogenicity associated with the paspaline-derived IDTs is not observed. The geranylgeranyl diphosphate (GGPP) synthase ggs1, localized outside of the cluster, is proposed to catalyze the first step in nodulisporic acid biosynthesis via conversion of farnesyl pyrophosphate and isopentyl pyrophosphate into geranylgeranyl pyrophosphate (GGPP). Condensation of indole-3-glycerol phosphate with GGPP by the prenyl transferase nodC then forms 3-geranylgeranylindole (3-GGI). Epoxidation by the FAD-dependent monooxygenase nodM leads to a single-epoxidized-GGI that is substrate of the terpene cyclase nodB for cyclization to yield emindole SB. The terminal methyl carbon, C28, of emindole SB is then oxidized by the cytochrome P450 monooxygenase nodW to produce nodulisporic acid F (NAF), the pentacyclic core of NAA. NAF is converted to nodulisporic acid E (NAE) via prenylation. This step is probably performed by one of the indole diterpene prenyltransferases nodD1 or nodD2. Several oxidation steps performed by the FAD-linked oxidoreductase nodO and one of the cytochrome P450 monooxygenase nodR, nodX or nodZ further convert NAE to nodulisporic acid D (NAD). NAD is substrate of cytochrome P450 monooxygenase nodJ to produce the precursor of nodulisporic acid C (NAC), converted to NAC by one of the indole diterpene prenyltransferases nodD1 or nodD2. The FAD-dependent monooxygenase nodY2 then oxidizes NAC to nodulisporic acid B (NAB). Finally NAB is converted to NAA by one of the cytochrome P450 monooxygenases nodR, nodX or nodZ. This Hypoxylon pulicicidum protein is Prenyl transferase nodC.